Reading from the N-terminus, the 204-residue chain is Urease accessory protein UreG 1 (204 aa).

A GTP-binding site is contributed by 14–21; the sequence is GPVGSGKT.

The protein belongs to the SIMIBI class G3E GTPase family. UreG subfamily. In terms of assembly, homodimer. UreD, UreF and UreG form a complex that acts as a GTP-hydrolysis-dependent molecular chaperone, activating the urease apoprotein by helping to assemble the nickel containing metallocenter of UreC. The UreE protein probably delivers the nickel.

The protein resides in the cytoplasm. In terms of biological role, facilitates the functional incorporation of the urease nickel metallocenter. This process requires GTP hydrolysis, probably effectuated by UreG. This Methylorubrum populi (strain ATCC BAA-705 / NCIMB 13946 / BJ001) (Methylobacterium populi) protein is Urease accessory protein UreG 1.